A 335-amino-acid chain; its full sequence is MESPAPGARCPVQEQRARWERKRACTARELLETERRYQEQLGLVATYFVAILRAKGTLRPPERQALFGPWELIYGASQELLPYLEGGRWGQGLEGFCNHLELYTQFAANVERSRTILQEQLKKNKHFRRFVRLQEGRPEFGGLQLQDLLPLPLQRLQQYENLAVALAENTGPNSPEHKQLTRAAQLISETAQRVHTIGQKQKNEQHLQRIQALLSGRQAKGLISGRWFLRQGWLLVVPPRGEPRPRMFFLFSDALLMAKPRPPLHLLQSGTFACRALYPMGECQLHRVFGHSGGPCGGLLSLSFPHEKLLLMSTDQEELSHWYHSLTLAISSQKN.

The region spanning 22 to 197 (KRACTARELL…SETAQRVHTI (176 aa)) is the DH domain. One can recognise a PH domain in the interval 227–331 (WFLRQGWLLV…WYHSLTLAIS (105 aa)).

Its subcellular location is the cell membrane. In terms of biological role, promotes cell proliferation. In Bos taurus (Bovine), this protein is Rho guanine nucleotide exchange factor 39 (ARHGEF39).